The primary structure comprises 1439 residues: MPGSPARGAAMGGGPRGLRKTWTELLAGRVKKQKYDPEREQKLKDSALKLLRYHQNMHDLLLEVEEPQCKRLRLSELIDRDSADASSDRSASFIRSAFRDQASRLGVPVGVLSAKVFARSVQQVCVEPSHPVLLSPEQSKKLSSLLMIARHLLAQNMFSRLTFCQELWKAQNSLLLEAMWRLHTHSVVSLQELLQSHPDSEAMAMWLFRNLRSLCEQIGASCPSPDTTEAMLSGLVQLLISRGFQGSSDPRRLVEPERLPQVATDVLQRMLAFSLDTLEADPQTTLDCQAVSGWIPIYSGHTCCGVVTENSLKSFFSHTLTQILTHKPVLKVSDAIQMQKEWSFAKTHHLLTDLHCRVLATLGPEESVGRLQEVLEMQEVNWQHVLSCVSTLVVCFPEAQQLVKGWVASLMARAFESYHLDSMVTAFLIVRQATLEGPYVFPSYADWFKESFGSSHGYHSCSKKTLVFLFKFLSDLVPWEAPRYMQVHIFHPPLVPSKYHSLLTDYISLAKTRLADLKVSLENVGLYEDLSSPGDIAERESQAVQDVKKAIMVFEQTGKIPMPVLEASIFRRPYYVSHFLPTLLAPRVLPEVPDPRVALIETLKRADKIPSSIYDAYRKACASAEKQQPENATSAQRTEADCAKEPLGLLTAALEELRALMTDPTQYSVISAQVAVVSEKLNAVLGHRNDGGSLQRAKIQLSVLPSTLQKQDQAVVDLLLTAFCQNLMAASSFVPPERQSPWAVLFVRTLCGHVLLPAVLTRLRQLLRHQGQSLSTSHVLGLAALAVHLGECRSMLPEVDPDVLAPSAGSLCVPDFLNSLLTCRTRDSLLFCMNFCTAAVSYCLCKFSALRNCLSPGLIKKFQFVVLRLFPEARAPCAPEHAACVPWRPLYLPSADWQRAALSLWRRDSFQELLKDKEFYLTYRDWVQLELEIQPEADVLSDMERHDFHQWAIYERYLPAPTALGGCGGDLEEACTVLVSEIMDFHQSSRSYNHSEDSDLVLGGRTGNKDILSRLQEIALDLELDQGSAVPHGCSTPQSHFLFRVFRRRLQALARPDSMATSLRRQQELLTCKRLLLCLPPSVLVGGPQAGQPISPNCGEFFSLVNSELRNFCCHGSVLTSDITIHFFRGLLRVCLRSQDPALVANQTLTECQTKCPVILTSALLWWSSLEPVLCGRWMRCYQSPLPRELRRLQEAREFASNFASASASPAPSPAWIAAAALHFAWRGVRKEDVTAHLQRLDCQREELLIALFFFSLMGLLSSYLTQRDTAEHLKAVDICAEVLTCLERRKVSWLVLFQLTEKDAKLGHLLHLAPDQHTRLLPLAFYSLLSCFSEGAAVREAAFLHVAVDMYLKLLQLFVDGETRLQGHSESQGSPVQLITKARVFLLQLIPQCPKQCFSNMTELLAGRGDCDPEVSNALRQRQQADPSFDLYQEPQLF.

The segment at 1–20 is disordered; the sequence is MPGSPARGAAMGGGPRGLRK. Residues 19-35 carry the Nuclear localization signal motif; that stretch reads RKTWTELLAGRVKKQKY.

In terms of assembly, belongs to the multisubunit FA complex composed of FANCA, FANCB, FANCC, FANCE, FANCF, FANCG, FANCL/PHF9 and FANCM. In complex with FANCF, FANCG and FANCL, but not with FANCC, nor FANCE, interacts with HES1; this interaction may be essential for the stability and nuclear localization of FA core complex proteins. The complex with FANCC and FANCG may also include EIF2AK2 and HSP70. Interacts with FAAP20; interaction is direct. In terms of processing, phosphorylated primarily on serine residues. Phosphorylation is required for the formation of the nuclear complex. As to expression, mainly expressed in testis and lymphoid tissues like thymus, lymph nodes, and spleen, and at lower levels in kidney and ovary.

It localises to the nucleus. The protein resides in the cytoplasm. In terms of biological role, DNA repair protein that may operate in a postreplication repair or a cell cycle checkpoint function. May be involved in interstrand DNA cross-link repair and in the maintenance of normal chromosome stability. The sequence is that of Fanconi anemia group A protein homolog (Fanca) from Mus musculus (Mouse).